The chain runs to 230 residues: Orotidine 5'-phosphate decarboxylase (230 aa).

Substrate is bound by residues aspartate 11, lysine 34, 61–70 (DLKLHDIPNT), threonine 117, arginine 179, glutamine 188, glycine 208, and arginine 209. Lysine 63 acts as the Proton donor in catalysis.

This sequence belongs to the OMP decarboxylase family. Type 1 subfamily. Homodimer.

The enzyme catalyses orotidine 5'-phosphate + H(+) = UMP + CO2. It functions in the pathway pyrimidine metabolism; UMP biosynthesis via de novo pathway; UMP from orotate: step 2/2. Its function is as follows. Catalyzes the decarboxylation of orotidine 5'-monophosphate (OMP) to uridine 5'-monophosphate (UMP). The polypeptide is Orotidine 5'-phosphate decarboxylase (Streptococcus gordonii (strain Challis / ATCC 35105 / BCRC 15272 / CH1 / DL1 / V288)).